A 514-amino-acid chain; its full sequence is 2,3-bisphosphoglycerate-independent phosphoglycerate mutase (514 aa).

The Mn(2+) site is built by aspartate 14 and serine 64. The active-site Phosphoserine intermediate is the serine 64. Residues histidine 125, 155–156 (RD), arginine 187, arginine 193, 263–266 (RADR), and lysine 336 contribute to the substrate site. 5 residues coordinate Mn(2+): aspartate 403, histidine 407, aspartate 444, histidine 445, and histidine 463.

Belongs to the BPG-independent phosphoglycerate mutase family. Monomer. Requires Mn(2+) as cofactor.

It catalyses the reaction (2R)-2-phosphoglycerate = (2R)-3-phosphoglycerate. The protein operates within carbohydrate degradation; glycolysis; pyruvate from D-glyceraldehyde 3-phosphate: step 3/5. Functionally, catalyzes the interconversion of 2-phosphoglycerate and 3-phosphoglycerate. In Shewanella putrefaciens (strain CN-32 / ATCC BAA-453), this protein is 2,3-bisphosphoglycerate-independent phosphoglycerate mutase.